A 155-amino-acid polypeptide reads, in one-letter code: SsrA-binding protein (155 aa).

Residues 135 to 147 are compositionally biased toward basic and acidic residues; sequence TIKRRDQERDIKK. Residues 135–155 form a disordered region; that stretch reads TIKRRDQERDIKKQMKHYNAR.

The protein belongs to the SmpB family.

Its subcellular location is the cytoplasm. Functionally, required for rescue of stalled ribosomes mediated by trans-translation. Binds to transfer-messenger RNA (tmRNA), required for stable association of tmRNA with ribosomes. tmRNA and SmpB together mimic tRNA shape, replacing the anticodon stem-loop with SmpB. tmRNA is encoded by the ssrA gene; the 2 termini fold to resemble tRNA(Ala) and it encodes a 'tag peptide', a short internal open reading frame. During trans-translation Ala-aminoacylated tmRNA acts like a tRNA, entering the A-site of stalled ribosomes, displacing the stalled mRNA. The ribosome then switches to translate the ORF on the tmRNA; the nascent peptide is terminated with the 'tag peptide' encoded by the tmRNA and targeted for degradation. The ribosome is freed to recommence translation, which seems to be the essential function of trans-translation. The polypeptide is SsrA-binding protein (Streptococcus pyogenes serotype M3 (strain SSI-1)).